Reading from the N-terminus, the 833-residue chain is A disintegrin and metalloproteinase with thrombospondin motifs 4 (833 aa).

A signal peptide spans 1–49 (MSQMGLHPRRGLTGHWLQRFQPCLPLHTVQWRRLLLLAFLLSLAWPASP). Residues 50–208 (LPREEEIVFP…PSPISRRTKR (159 aa)) constitute a propeptide that is removed on maturation. N-linked (GlcNAc...) asparagine glycosylation is present at Asn-63. The disordered stretch occupies residues 180–204 (KSPASSQGPMCTVKAPSGSPSPISR). A Cysteine switch motif is present at residues 188–195 (PMCTVKAP). Zn(2+) is bound at residue Cys-190. The 211-residue stretch at 214–424 (RFVETLVVAD…GYGHCLLDKP (211 aa)) folds into the Peptidase M12B domain. Disulfide bonds link Cys-289/Cys-341, Cys-318/Cys-323, Cys-335/Cys-419, Cys-373/Cys-403, Cys-445/Cys-468, Cys-456/Cys-478, Cys-463/Cys-497, Cys-491/Cys-502, Cys-528/Cys-565, Cys-532/Cys-570, and Cys-543/Cys-555. Asn-299 is a glycosylation site (N-linked (GlcNAc...) asparagine). His-357 is a Zn(2+) binding site. Glu-358 is an active-site residue. 2 residues coordinate Zn(2+): His-361 and His-367. A Disintegrin domain is found at 433 to 515 (TFPGKDYDAD…DQLKDFNVPQ (83 aa)). One can recognise a TSP type-1 domain in the interval 516–571 (AGGWGPWGPWGDCSRTCGGGVQFSSRDCTRPVPRNGGKYCEGRRTRFRSCNTENCP). Positions 682 to 833 (SKQSGSFKKF…LRKRPWAGRK (152 aa)) are spacer.

Interacts with SRPX2. Zn(2+) serves as cofactor. Post-translationally, the precursor is cleaved by a furin endopeptidase. Glycosylated. Can be O-fucosylated by POFUT2 on a serine or a threonine residue found within the consensus sequence C1-X(2)-(S/T)-C2-G of the TSP type-1 repeat domains where C1 and C2 are the first and second cysteine residue of the repeat, respectively. Fucosylated repeats can then be further glycosylated by the addition of a beta-1,3-glucose residue by the glucosyltransferase, B3GALTL. Fucosylation mediates the efficient secretion of ADAMTS family members. Can also be C-glycosylated with one or two mannose molecules on tryptophan residues within the consensus sequence W-X-X-W of the TPRs, and N-glycosylated. These other glycosylations can also facilitate secretion.

It localises to the secreted. The protein resides in the extracellular space. Its subcellular location is the extracellular matrix. It catalyses the reaction Glutamyl endopeptidase. Bonds cleaved include 370-Thr-Glu-Gly-Glu-|-Ala-Arg-Gly-Ser-377 in the interglobular domain of mammalian aggrecan.. In terms of biological role, cleaves aggrecan, a cartilage proteoglycan, at the '392-Glu-|-Ala-393' site and may be involved in its turnover. Also cleaves COMP. May play an important role in the destruction of aggrecan in arthritic diseases. This chain is A disintegrin and metalloproteinase with thrombospondin motifs 4 (Adamts4), found in Mus musculus (Mouse).